The primary structure comprises 538 residues: Cytochrome P450 monooxygenase verH (538 aa).

A helical transmembrane segment spans residues 2-21 (VFAMLVVCWSIFLGLWMLVS). Residue C445 coordinates heme.

It belongs to the cytochrome P450 family. It depends on heme as a cofactor.

The protein localises to the membrane. The protein operates within secondary metabolite biosynthesis; terpenoid biosynthesis. It participates in mycotoxin biosynthesis. Cytochrome P450 monooxygenase; part of the gene cluster that mediates the biosynthesis of the neurotoxin verrucosidin, a methylated alpha-pyrone polyketide that inhibits oxidative phosphorylation in mitochondria and thereby causes neurological diseases. The carbon backbone of verrucosidin is synthesized by the HR-PKS verA, and further modified by the other verrucodidin cluster enzymes. The sequence is that of Cytochrome P450 monooxygenase verH from Penicillium polonicum.